A 396-amino-acid chain; its full sequence is UDP-galactose translocator (396 aa).

Helical transmembrane passes span 3 to 23, 37 to 57, 65 to 85, 97 to 117, 140 to 160, 169 to 189, 200 to 220, 238 to 258, 269 to 289, and 315 to 335; these read AVGAGGSTAAPGPGAVSAGAL, YISLAVLVVQNASLILSIRYA, FFATTAVVMAEVLKGLTCLLL, LVLFLHEAVLVQYVDTLKLAV, TFQVTYQLKILTTALFSVLML, WASLLLLFTGVAIVQAQQAGG, GAGLAAVVASCLSSGFAGVYF, LGLFGTALGLVGLWWAEGTAV, PAVWGVVLNQAFGGLLVAVVV, and LFGFHVDPLFALGAGLVIGAV. The segment at 358–379 is disordered; that stretch reads PCVHQQPPGQPPPPQLSSHRGD. The ER retention motif motif lies at 392 to 396; that stretch reads KVKGS.

It belongs to the nucleotide-sugar transporter family. SLC35A subfamily. Interacts with SLC35A3; the interaction is reduced in the presence of SLC35A4. Found in a complex with SLC35A3 and SLC35A4. As to quaternary structure, interacts with B4GALT4.

It is found in the endoplasmic reticulum membrane. The protein localises to the golgi apparatus membrane. It catalyses the reaction UMP(out) + UDP-alpha-D-galactose(in) = UMP(in) + UDP-alpha-D-galactose(out). The catalysed reaction is UDP-N-acetyl-alpha-D-galactosamine(in) + UMP(out) = UDP-N-acetyl-alpha-D-galactosamine(out) + UMP(in). It carries out the reaction UMP(out) + UDP-alpha-D-glucose(in) = UMP(in) + UDP-alpha-D-glucose(out). The enzyme catalyses UMP(out) + UDP-N-acetyl-alpha-D-glucosamine(in) = UMP(in) + UDP-N-acetyl-alpha-D-glucosamine(out). It catalyses the reaction UDP-alpha-D-galactose(in) + AMP(out) = UDP-alpha-D-galactose(out) + AMP(in). The catalysed reaction is UDP-alpha-D-galactose(in) + CMP(out) = UDP-alpha-D-galactose(out) + CMP(in). It carries out the reaction UDP-N-acetyl-alpha-D-galactosamine(out) + UDP-alpha-D-galactose(in) = UDP-N-acetyl-alpha-D-galactosamine(in) + UDP-alpha-D-galactose(out). The enzyme catalyses UDP-N-acetyl-alpha-D-glucosamine(out) + UDP-alpha-D-galactose(in) = UDP-N-acetyl-alpha-D-glucosamine(in) + UDP-alpha-D-galactose(out). It catalyses the reaction UDP-alpha-D-galactose(in) + UDP-alpha-D-glucose(out) = UDP-alpha-D-galactose(out) + UDP-alpha-D-glucose(in). The catalysed reaction is UMP(out) + CMP(in) = UMP(in) + CMP(out). It carries out the reaction UMP(out) + AMP(in) = UMP(in) + AMP(out). Its function is as follows. Transports uridine diphosphate galactose (UDP-galactose) from the cytosol into the Golgi apparatus, functioning as an antiporter that exchanges UDP-galactose for UMP. It is also able to exchange UDP-galactose for AMP and CMP, and to transport UDP-N-acetylgalactosamine (UDP-GalNAc) and other nucleotide sugars. As a provider of UDP-galactose to galactosyltransferases present in the Golgi apparatus, it is necessary for globotriaosylceramide/globoside (Gb3Cer) synthesis from lactosylceramide. This chain is UDP-galactose translocator, found in Homo sapiens (Human).